A 287-amino-acid chain; its full sequence is Pantothenate synthetase (287 aa).

Residue 30 to 37 (MGNLHDGH) participates in ATP binding. The active-site Proton donor is histidine 37. Glutamine 61 contributes to the (R)-pantoate binding site. Residue glutamine 61 participates in beta-alanine binding. 148–151 (GQKD) contacts ATP. Glutamine 154 lines the (R)-pantoate pocket. ATP contacts are provided by residues isoleucine 177 and 185–188 (LSSR).

It belongs to the pantothenate synthetase family. Homodimer.

It localises to the cytoplasm. The enzyme catalyses (R)-pantoate + beta-alanine + ATP = (R)-pantothenate + AMP + diphosphate + H(+). It participates in cofactor biosynthesis; (R)-pantothenate biosynthesis; (R)-pantothenate from (R)-pantoate and beta-alanine: step 1/1. Functionally, catalyzes the condensation of pantoate with beta-alanine in an ATP-dependent reaction via a pantoyl-adenylate intermediate. This Psychrobacter cryohalolentis (strain ATCC BAA-1226 / DSM 17306 / VKM B-2378 / K5) protein is Pantothenate synthetase.